An 865-amino-acid chain; its full sequence is Bifunctional uridylyltransferase/uridylyl-removing enzyme (865 aa).

The segment at Met1–Leu318 is uridylyltransferase. Residues Ile319–Leu675 form a uridylyl-removing region. Positions Val437–Leu559 constitute an HD domain. 2 consecutive ACT domains span residues Gln676–His762 and Arg789–Ala865. The tract at residues Asp747–Arg767 is disordered. Residues Ala751–Arg767 show a composition bias toward basic residues.

This sequence belongs to the GlnD family. Mg(2+) serves as cofactor.

It carries out the reaction [protein-PII]-L-tyrosine + UTP = [protein-PII]-uridylyl-L-tyrosine + diphosphate. It catalyses the reaction [protein-PII]-uridylyl-L-tyrosine + H2O = [protein-PII]-L-tyrosine + UMP + H(+). With respect to regulation, uridylyltransferase (UTase) activity is inhibited by glutamine, while glutamine activates uridylyl-removing (UR) activity. Its function is as follows. Modifies, by uridylylation and deuridylylation, the PII regulatory proteins (GlnB and homologs), in response to the nitrogen status of the cell that GlnD senses through the glutamine level. Under low glutamine levels, catalyzes the conversion of the PII proteins and UTP to PII-UMP and PPi, while under higher glutamine levels, GlnD hydrolyzes PII-UMP to PII and UMP (deuridylylation). Thus, controls uridylylation state and activity of the PII proteins, and plays an important role in the regulation of nitrogen assimilation and metabolism. This chain is Bifunctional uridylyltransferase/uridylyl-removing enzyme, found in Bordetella bronchiseptica (strain ATCC BAA-588 / NCTC 13252 / RB50) (Alcaligenes bronchisepticus).